We begin with the raw amino-acid sequence, 382 residues long: Inactive ubiquitin-specific protease 5 (382 aa).

The DUSP domain occupies 16–141 (VPAEEERALI…GGPTLPRKAI (126 aa)). The 60-residue stretch at 323–382 (TGLLNLGNTCFMNSAIQCLVHTPEFARYFREDYHREINWQNPLGMVVSTLSTSMALKPYV) folds into the USP domain.

It belongs to the peptidase C19 family. As to expression, widely expressed with the highest expression in floral organs.

It localises to the cell membrane. Plays an important role in the development of floral organs and chloroplasts. Does not possess deubiquitinating enzyme activity in vitro. This Oryza sativa subsp. japonica (Rice) protein is Inactive ubiquitin-specific protease 5.